Reading from the N-terminus, the 55-residue chain is Ribulose bisphosphate carboxylase large chain (55 aa).

The Proton acceptor role is filled by histidine 18. 2 residues coordinate substrate: arginine 19 and histidine 27.

This sequence belongs to the RuBisCO large chain family. Type I subfamily. In terms of assembly, heterohexadecamer of 8 large chains and 8 small chains; disulfide-linked. The disulfide link is formed within the large subunit homodimers. Mg(2+) serves as cofactor. In terms of processing, the disulfide bond which can form in the large chain dimeric partners within the hexadecamer appears to be associated with oxidative stress and protein turnover.

The protein localises to the plastid. Its subcellular location is the chloroplast. It catalyses the reaction 2 (2R)-3-phosphoglycerate + 2 H(+) = D-ribulose 1,5-bisphosphate + CO2 + H2O. The enzyme catalyses D-ribulose 1,5-bisphosphate + O2 = 2-phosphoglycolate + (2R)-3-phosphoglycerate + 2 H(+). RuBisCO catalyzes two reactions: the carboxylation of D-ribulose 1,5-bisphosphate, the primary event in carbon dioxide fixation, as well as the oxidative fragmentation of the pentose substrate in the photorespiration process. Both reactions occur simultaneously and in competition at the same active site. This Vitis sp. (Grape) protein is Ribulose bisphosphate carboxylase large chain.